Consider the following 81-residue polypeptide: uncharacterized protein (81 aa).

The transit peptide at 1–20 directs the protein to the mitochondrion; it reads MYSRVLSVAAIVTMALAVQA. Positions 27–53 are disordered; sequence YGNTTNSTGTTNGTNGTNTTTSSTATQ. Low complexity predominate over residues 28-53; it reads GNTTNSTGTTNGTNGTNTTTSSTATQ. The helical transmembrane segment at 59 to 79 threads the bilayer; it reads ITNFSSGAFVIAMIAVACSVM.

The protein resides in the mitochondrion membrane. This is an uncharacterized protein from Schizosaccharomyces pombe (strain 972 / ATCC 24843) (Fission yeast).